Reading from the N-terminus, the 188-residue chain is Grand meiotic recombination cluster protein 2 (188 aa).

Composition is skewed to polar residues over residues Met1–Glu13 and Glu21–Val31. The segment at Met1–Val31 is disordered.

Its function is as follows. Probable transcriptional activator involved in meiotic prophase and synaptonemal complex (SC) assembly. The protein is Grand meiotic recombination cluster protein 2 (GMC2) of Saccharomyces cerevisiae (strain ATCC 204508 / S288c) (Baker's yeast).